Consider the following 109-residue polypeptide: Flagellar hook-basal body complex protein FliE (109 aa).

The protein belongs to the FliE family.

It localises to the bacterial flagellum basal body. This is Flagellar hook-basal body complex protein FliE from Pseudomonas fluorescens (strain SBW25).